Consider the following 247-residue polypeptide: PF03932 family protein CutC (247 aa).

Residues 205–222 (KSTRPSLMESNSSAQMGS) are compositionally biased toward polar residues. A disordered region spans residues 205–226 (KSTRPSLMESNSSAQMGSNDVD).

It belongs to the CutC family.

Its subcellular location is the cytoplasm. This chain is PF03932 family protein CutC, found in Vibrio atlanticus (strain LGP32) (Vibrio splendidus (strain Mel32)).